Reading from the N-terminus, the 300-residue chain is 11-beta-hydroxysteroid dehydrogenase 1 (300 aa).

Topologically, residues methionine 1 to tyrosine 7 are cytoplasmic. A helical; Signal-anchor for type II membrane protein membrane pass occupies residues leucine 8 to asparagine 24. At glutamate 25–alanine 300 the chain is on the lumenal side. NADP(+)-binding positions include glycine 41–serine 67, serine 92–methionine 93, and asparagine 119–tyrosine 123. Serine 170 is a binding site for substrate. The Proton acceptor role is filled by tyrosine 183. Tyrosine 183 to lysine 187 contributes to the NADP(+) binding site. An N-linked (GlcNAc...) asparagine glycan is attached at asparagine 207. Residue isoleucine 218–threonine 222 participates in NADP(+) binding.

It belongs to the short-chain dehydrogenases/reductases (SDR) family. As to quaternary structure, homodimer. In terms of tissue distribution, widely expressed in all peripheral tissues, with highest expression in liver, followed by kidney and lung, and very low expression in heart, lung, spleen, stomach, small intestine, colon, skin, skeletal muscle, and ovary.

Its subcellular location is the endoplasmic reticulum membrane. The enzyme catalyses an 11beta-hydroxysteroid + NADP(+) = an 11-oxosteroid + NADPH + H(+). It catalyses the reaction cortisone + NADPH + H(+) = cortisol + NADP(+). It carries out the reaction corticosterone + NADP(+) = 11-dehydrocorticosterone + NADPH + H(+). The catalysed reaction is a 7beta-hydroxysteroid + NADP(+) = a 7-oxosteroid + NADPH + H(+). The enzyme catalyses 7-oxocholesterol + NADPH + H(+) = 7beta-hydroxycholesterol + NADP(+). It catalyses the reaction chenodeoxycholate + NADP(+) = 7-oxolithocholate + NADPH + H(+). It carries out the reaction 7-oxolithocholate + NADPH + H(+) = ursodeoxycholate + NADP(+). The catalysed reaction is glycochenodeoxycholate + NADP(+) = 7-oxoglycolithocholate + NADPH + H(+). The enzyme catalyses taurochenodeoxycholate + NADP(+) = 7-oxotaurolithocholate + NADPH + H(+). It catalyses the reaction tauroursodeoxycholate + NADP(+) = 7-oxotaurolithocholate + NADPH + H(+). It carries out the reaction glycoursodeoxycholate + NADP(+) = 7-oxoglycolithocholate + NADPH + H(+). The catalysed reaction is 7-oxopregnenolone + NADPH + H(+) = 7beta-hydroxypregnenolone + NADP(+). The enzyme catalyses 3beta,7alpha-dihydroxyandrost-5-en-17-one + NADP(+) = 3beta-hydroxy-5-androstene-7,17-dione + NADPH + H(+). It catalyses the reaction 3beta-hydroxy-5-androstene-7,17-dione + NADPH + H(+) = 3beta,7beta-dihydroxyandrost-5-en-17-one + NADP(+). It carries out the reaction 3beta-hydroxy-5alpha-androstane-7,17-dione + NADPH + H(+) = 3beta,7beta-dihydroxy-5alpha-androstan-17-one + NADP(+). Controls the reversible conversion of biologically active glucocorticoids such as cortisone to cortisol, and 11-dehydrocorticosterone to corticosterone in the presence of NADP(H). Participates in the corticosteroid receptor-mediated anti-inflammatory response, as well as metabolic and homeostatic processes. Bidirectional in vitro, predominantly functions as a reductase in vivo, thereby increasing the concentration of active glucocorticoids. It has broad substrate specificity, besides glucocorticoids, it accepts other steroid and sterol substrates. Interconverts 7-oxo- and 7-hydroxy-neurosteroids such as 7-oxopregnenolone and 7beta-hydroxypregnenolone, 7-oxodehydroepiandrosterone (3beta-hydroxy-5-androstene-7,17-dione) and 7beta-hydroxydehydroepiandrosterone (3beta,7beta-dihydroxyandrost-5-en-17-one), among others. Catalyzes the stereo-specific conversion of the major dietary oxysterol, 7-ketocholesterol (7-oxocholesterol), into the more polar 7-beta-hydroxycholesterol metabolite. 7-oxocholesterol is one of the most important oxysterols, it participates in several events such as induction of apoptosis, accumulation in atherosclerotic lesions, lipid peroxidation, and induction of foam cell formation. Mediates the 7-oxo reduction of 7-oxolithocholate mainly to chenodeoxycholate, and to a lesser extent to ursodeoxycholate, both in its free form and when conjugated to glycine or taurine, providing a link between glucocorticoid activation and bile acid metabolism. Catalyzes the synthesis of 7-beta-25-dihydroxycholesterol from 7-oxo-25-hydroxycholesterol in vitro, which acts as a ligand for the G-protein-coupled receptor (GPCR) Epstein-Barr virus-induced gene 2 (EBI2) and may thereby regulate immune cell migration. This chain is 11-beta-hydroxysteroid dehydrogenase 1 (HSD11B1), found in Cavia porcellus (Guinea pig).